The primary structure comprises 150 residues: Large ribosomal subunit protein bL9 (150 aa).

The protein belongs to the bacterial ribosomal protein bL9 family.

Functionally, binds to the 23S rRNA. In Neisseria meningitidis serogroup C (strain 053442), this protein is Large ribosomal subunit protein bL9.